Reading from the N-terminus, the 391-residue chain is MKYDAFVVGGGPAGSTAAWDMARAGLKVALLDRAGRIKPCGGAIPPRLIRDFDIPDHLLVAKITSARMISPTGRFVDIPIENGFVGMVDREDYDEWLRERAGKAGAERLTGTWLRIERDSGKTVVVWRDKVTGEEMKAETRVVIGADGANSQVRNEVPATKIPLVFAYHEIIKAPTTVANYDPTRCDVYYDGRISPDFYGWVFPHGKTASIGMGTELPDVSLKDCTTLLRQMSGLDKEETIRKEGAPIPLQPLDVWDNGKDVVLSGDAAGVVAPSSGEGIYYAHAGGRYAAEAAMAFLKSGKPADLKLARAGFMKEHGTVFKVLRMMQDKYYHSDDRRERFVSLCHDVDVQRMTFESYMNKKMTKFQPLKNLKIGFKNLAHLSGLVPPQWT.

This sequence belongs to the geranylgeranyl reductase family. ChlP subfamily.

The enzyme catalyses phytyl diphosphate + 3 NADP(+) = geranylgeranyl diphosphate + 3 NADPH + 3 H(+). The protein operates within porphyrin-containing compound metabolism; bacteriochlorophyll biosynthesis (light-independent). Its function is as follows. Catalyzes the stepwise hydrogenation of geranylgeraniol to phytol during bacteriochlorophyll A (BchlA) biosynthesis. This Rhodobacter capsulatus (strain ATCC BAA-309 / NBRC 16581 / SB1003) protein is Geranylgeranyl diphosphate reductase (bchP).